Reading from the N-terminus, the 192-residue chain is Orotate phosphoribosyltransferase (192 aa).

116–124 (EDIVTTGLS) provides a ligand contact to 5-phospho-alpha-D-ribose 1-diphosphate. Positions 120 and 148 each coordinate orotate.

The protein belongs to the purine/pyrimidine phosphoribosyltransferase family. PyrE subfamily. In terms of assembly, homodimer. Requires Mg(2+) as cofactor.

It catalyses the reaction orotidine 5'-phosphate + diphosphate = orotate + 5-phospho-alpha-D-ribose 1-diphosphate. Its pathway is pyrimidine metabolism; UMP biosynthesis via de novo pathway; UMP from orotate: step 1/2. Functionally, catalyzes the transfer of a ribosyl phosphate group from 5-phosphoribose 1-diphosphate to orotate, leading to the formation of orotidine monophosphate (OMP). This Bartonella quintana (strain Toulouse) (Rochalimaea quintana) protein is Orotate phosphoribosyltransferase.